A 51-amino-acid polypeptide reads, in one-letter code: uncharacterized protein (51 aa).

The tract at residues Met1–Ser42 is disordered.

The protein resides in the mitochondrion. This is an uncharacterized protein from Saccharomyces cerevisiae (strain ATCC 204508 / S288c) (Baker's yeast).